Reading from the N-terminus, the 327-residue chain is Transaldolase (327 aa).

Lysine 132 acts as the Schiff-base intermediate with substrate in catalysis.

This sequence belongs to the transaldolase family. Type 1 subfamily.

Its subcellular location is the cytoplasm. The enzyme catalyses D-sedoheptulose 7-phosphate + D-glyceraldehyde 3-phosphate = D-erythrose 4-phosphate + beta-D-fructose 6-phosphate. It participates in carbohydrate degradation; pentose phosphate pathway; D-glyceraldehyde 3-phosphate and beta-D-fructose 6-phosphate from D-ribose 5-phosphate and D-xylulose 5-phosphate (non-oxidative stage): step 2/3. Its function is as follows. Transaldolase is important for the balance of metabolites in the pentose-phosphate pathway. This is Transaldolase from Chlamydia trachomatis serovar D (strain ATCC VR-885 / DSM 19411 / UW-3/Cx).